The following is a 286-amino-acid chain: Phosphate import ATP-binding protein PstB (286 aa).

An ABC transporter domain is found at 40-281 (VVAKDFSIFY…PRDRMTEDYI (242 aa)). Residue 72-79 (GPSGCGKS) participates in ATP binding.

This sequence belongs to the ABC transporter superfamily. Phosphate importer (TC 3.A.1.7) family. In terms of assembly, the complex is composed of two ATP-binding proteins (PstB), two transmembrane proteins (PstC and PstA) and a solute-binding protein (PstS).

It is found in the cell inner membrane. The catalysed reaction is phosphate(out) + ATP + H2O = ADP + 2 phosphate(in) + H(+). Part of the ABC transporter complex PstSACB involved in phosphate import. Responsible for energy coupling to the transport system. The polypeptide is Phosphate import ATP-binding protein PstB (Chlorobium luteolum (strain DSM 273 / BCRC 81028 / 2530) (Pelodictyon luteolum)).